We begin with the raw amino-acid sequence, 246 residues long: MNILLSNDDGYHAEGIQILARELRKFADVTIVAPDRNRSAASGSLTLVEPLRPRHLDDGDYCVNGTPADCVHLALNGFLSGRMDLVVSGINAGVNLGDDVIYSGTVAAALEGRHLGLPSIAVSLDGRRYYETAARVVCDLIPKLHTRLLNPREIININVPDIPYDQIKGIKVCRLGHRAASAEVIKQQDPRGESIYWIGPAALPEDDEEGTDFHAVNNGYVAITPIQVDMTSYNSMSALQDWLESE.

Positions 8, 9, 39, and 91 each coordinate a divalent metal cation.

It belongs to the SurE nucleotidase family. A divalent metal cation is required as a cofactor.

It is found in the cytoplasm. The catalysed reaction is a ribonucleoside 5'-phosphate + H2O = a ribonucleoside + phosphate. Functionally, nucleotidase that shows phosphatase activity on nucleoside 5'-monophosphates. The chain is 5'-nucleotidase SurE from Mannheimia succiniciproducens (strain KCTC 0769BP / MBEL55E).